We begin with the raw amino-acid sequence, 331 residues long: Glyceraldehyde-3-phosphate dehydrogenase (331 aa).

Residues 12–13 (RI), aspartate 34, arginine 78, and threonine 120 each bind NAD(+). D-glyceraldehyde 3-phosphate contacts are provided by residues 149-151 (SCT), threonine 180, 209-210 (TG), and arginine 232. The active-site Nucleophile is cysteine 150. Residue asparagine 314 coordinates NAD(+).

This sequence belongs to the glyceraldehyde-3-phosphate dehydrogenase family. In terms of assembly, homotetramer.

It localises to the cytoplasm. It carries out the reaction D-glyceraldehyde 3-phosphate + phosphate + NAD(+) = (2R)-3-phospho-glyceroyl phosphate + NADH + H(+). Its pathway is carbohydrate degradation; glycolysis; pyruvate from D-glyceraldehyde 3-phosphate: step 1/5. Its function is as follows. Catalyzes the oxidative phosphorylation of glyceraldehyde 3-phosphate (G3P) to 1,3-bisphosphoglycerate (BPG) using the cofactor NAD. The first reaction step involves the formation of a hemiacetal intermediate between G3P and a cysteine residue, and this hemiacetal intermediate is then oxidized to a thioester, with concomitant reduction of NAD to NADH. The reduced NADH is then exchanged with the second NAD, and the thioester is attacked by a nucleophilic inorganic phosphate to produce BPG. The chain is Glyceraldehyde-3-phosphate dehydrogenase (gapA) from Shimwellia blattae (strain ATCC 29907 / DSM 4481 / JCM 1650 / NBRC 105725 / CDC 9005-74) (Escherichia blattae).